An 805-amino-acid polypeptide reads, in one-letter code: Phenylalanine--tRNA ligase beta subunit (805 aa).

Positions 39 to 148 (APPFTGVVVA…AALRPGTDIR (110 aa)) constitute a tRNA-binding domain. One can recognise a B5 domain in the interval 399-474 (PVREPVRMRL…RVYGFERIPD (76 aa)). 4 residues coordinate Mg(2+): D452, D458, E461, and E462. The FDX-ACB domain maps to 703 to 804 (SRQPAVVRDL…LVAAHNARQR (102 aa)).

It belongs to the phenylalanyl-tRNA synthetase beta subunit family. Type 1 subfamily. In terms of assembly, tetramer of two alpha and two beta subunits. Mg(2+) is required as a cofactor.

The protein resides in the cytoplasm. It carries out the reaction tRNA(Phe) + L-phenylalanine + ATP = L-phenylalanyl-tRNA(Phe) + AMP + diphosphate + H(+). This is Phenylalanine--tRNA ligase beta subunit from Bordetella parapertussis (strain 12822 / ATCC BAA-587 / NCTC 13253).